The primary structure comprises 24 residues: 33.0 kDa cold shock protein (24 aa).

Belongs to the thaumatin family. Homooligomer; disulfide-linked. Post-translationally, glycosylated.

It localises to the secreted. The protein resides in the extracellular space. Its subcellular location is the apoplast. This Arachis hypogaea (Peanut) protein is 33.0 kDa cold shock protein.